We begin with the raw amino-acid sequence, 180 residues long: D-lyxose ketol-isomerase (180 aa).

Lys62 contributes to the D-fructose binding site. Residues His75 and His77 each contribute to the Mn(2+) site. Position 86 (Lys86) interacts with D-fructose. Mn(2+) is bound by residues Glu88 and His143. D-fructose contacts are provided by Glu156, Asp166, and Arg175.

Belongs to the D-lyxose ketol-isomerase family. Homodimer; disulfide-linked. Stabilized by a disulfide bond between the two monomers of the dimeric enzyme and increased hydrophobicity at the dimer interface. Requires Mn(2+) as cofactor.

It carries out the reaction D-lyxose = D-xylulose. Sugar isomerase that catalyzes the reversible isomerization of D-lyxose to D-xylulose. Is highly specific for the substrate D-lyxose, showing less than 2% activity towards mannose and other substrates reported for lyxose isomerases. The protein is D-lyxose ketol-isomerase of Thermofilum sp. (strain ex4484_79).